Consider the following 235-residue polypeptide: 6-carboxyhexanoate--CoA ligase (235 aa).

Belongs to the BioW family. As to quaternary structure, homodimer. It depends on Mg(2+) as a cofactor.

The enzyme catalyses heptanedioate + ATP + CoA = 6-carboxyhexanoyl-CoA + AMP + diphosphate. Its pathway is metabolic intermediate metabolism; pimeloyl-CoA biosynthesis; pimeloyl-CoA from pimelate: step 1/1. Functionally, catalyzes the transformation of pimelate into pimeloyl-CoA with concomitant hydrolysis of ATP to AMP. This chain is 6-carboxyhexanoate--CoA ligase, found in Desulfovibrio desulfuricans (strain ATCC 27774 / DSM 6949 / MB).